The chain runs to 537 residues: Probable protein kinase UbiB (537 aa).

A helical membrane pass occupies residues 30–47 (LLPWWLRALGYLLPWRWL). The 365-residue stretch at 126–490 (RFDSEPLASA…KRERHDHHLL (365 aa)) folds into the Protein kinase domain. ATP is bound by residues 132 to 140 (LASASVAQV) and K154. D289 (proton acceptor) is an active-site residue. Helical transmembrane passes span 489-507 (LLRLLGAALLAGGVLLALQ) and 513-530 (ANAWPSWLMLASGLYLLV).

It belongs to the ABC1 family. UbiB subfamily.

The protein resides in the cell inner membrane. It functions in the pathway cofactor biosynthesis; ubiquinone biosynthesis [regulation]. Its function is as follows. Is probably a protein kinase regulator of UbiI activity which is involved in aerobic coenzyme Q (ubiquinone) biosynthesis. The sequence is that of Probable protein kinase UbiB from Azotobacter vinelandii (strain DJ / ATCC BAA-1303).